An 828-amino-acid chain; its full sequence is Periplasmic nitrate reductase (828 aa).

The segment at residues 1 to 31 is a signal peptide (tat-type signal); the sequence is MKLSRRSFMKANAVAAAAAAAGLSVPGVARA. A 4Fe-4S Mo/W bis-MGD-type domain is found at 39–95; that stretch reads IKWDKAPCRFCGTGCGVLVGTQQGRVVACQGDPDAPVNRGLNCIKGYFLPKIMYGKD. [4Fe-4S] cluster is bound by residues C46, C49, C53, and C81. Mo-bis(molybdopterin guanine dinucleotide)-binding positions include K83, Q150, N175, C179, 212-219, 243-247, 262-264, M372, Q376, N482, 508-509, K531, D558, and 718-727; these read WGSNMAEM, STFQH, QSD, SD, and TGRVLEHWHT. Substrate is bound at residue F794. Mo-bis(molybdopterin guanine dinucleotide) is bound by residues N802 and K819.

Belongs to the prokaryotic molybdopterin-containing oxidoreductase family. NasA/NapA/NarB subfamily. As to quaternary structure, component of the periplasmic nitrate reductase NapAB complex composed of NapA and NapB. Requires [4Fe-4S] cluster as cofactor. The cofactor is Mo-bis(molybdopterin guanine dinucleotide). Predicted to be exported by the Tat system. The position of the signal peptide cleavage has not been experimentally proven.

Its subcellular location is the periplasm. It catalyses the reaction 2 Fe(II)-[cytochrome] + nitrate + 2 H(+) = 2 Fe(III)-[cytochrome] + nitrite + H2O. Its function is as follows. Catalytic subunit of the periplasmic nitrate reductase complex NapAB. Receives electrons from NapB and catalyzes the reduction of nitrate to nitrite. This chain is Periplasmic nitrate reductase, found in Salmonella schwarzengrund (strain CVM19633).